Reading from the N-terminus, the 383-residue chain is Succinyl-diaminopimelate desuccinylase (383 aa).

A Zn(2+)-binding site is contributed by histidine 72. The active site involves aspartate 74. Residue aspartate 105 participates in Zn(2+) binding. Catalysis depends on glutamate 137, which acts as the Proton acceptor. Zn(2+) is bound by residues glutamate 138, glutamate 167, and histidine 352.

Belongs to the peptidase M20A family. DapE subfamily. In terms of assembly, homodimer. The cofactor is Zn(2+). Co(2+) is required as a cofactor.

It catalyses the reaction N-succinyl-(2S,6S)-2,6-diaminopimelate + H2O = (2S,6S)-2,6-diaminopimelate + succinate. The protein operates within amino-acid biosynthesis; L-lysine biosynthesis via DAP pathway; LL-2,6-diaminopimelate from (S)-tetrahydrodipicolinate (succinylase route): step 3/3. Catalyzes the hydrolysis of N-succinyl-L,L-diaminopimelic acid (SDAP), forming succinate and LL-2,6-diaminopimelate (DAP), an intermediate involved in the bacterial biosynthesis of lysine and meso-diaminopimelic acid, an essential component of bacterial cell walls. The sequence is that of Succinyl-diaminopimelate desuccinylase from Ehrlichia ruminantium (strain Welgevonden).